A 561-amino-acid polypeptide reads, in one-letter code: Developmental and secondary metabolism regulator veA (561 aa).

3 disordered regions span residues 1-23 (MANRPSLMPPHNETEHSVSRITR), 41-60 (ARACGAGAKSSADRRPVDPP), and 258-361 (AYAR…PQGI). Over residues 12-23 (NETEHSVSRITR) the composition is skewed to basic and acidic residues. Residues 25-233 (GKQLTYKLSV…AEQGCRVRIR (209 aa)) enclose the Velvet domain. Positions 39–44 (ERARAC) match the Nuclear localization signal motif. Residues 258 to 268 (AYARSSDRFTT) show a composition bias toward basic and acidic residues. Residues 324-339 (SHSQTPSYQSHLSFGS) show a composition bias toward polar residues. Over residues 347-357 (PHMPPTPPPVA) the composition is skewed to pro residues. The tract at residues 438 to 485 (RPQTPNLPAMPPPKPLSNDYANHVVPSVECTSPGGSGGGGYDNVRGKR) is PEST. The segment at 491 to 524 (GPTYGKRSHEDTFGLDDRSMQNGMRPDTEPYPAY) is disordered. The segment covering 497 to 509 (RSHEDTFGLDDRS) has biased composition (basic and acidic residues).

Belongs to the velvet family. VeA subfamily. In terms of assembly, component of the heterotrimeric velvet complex composed of laeA, veA and velB; velA acting as a bridging protein between laeA and velB. Interacts with kapA. Interacts with vosA and velc.

It localises to the nucleus. Its subcellular location is the cytoplasm. Component of the velvet transcription factor complex that controls sexual/asexual developmental ratio in response to light, promoting sexual development in the darkness while stimulating asexual sporulation under illumination. The velvet complex acts as a global regulator for secondary metabolite gene expression. Controls the expression of the penicillin gene cluster. Positively controls the expression of the class V chitinase chiB1. Positively controls the expression of the transcription factor atfA. Required for cell wall integrity and controls hyphal branching. The protein is Developmental and secondary metabolism regulator veA of Penicillium rubens (strain ATCC 28089 / DSM 1075 / NRRL 1951 / Wisconsin 54-1255) (Penicillium chrysogenum).